The sequence spans 299 residues: MTILDGKKISNDIKDEIAGEVTKIKKRGEKVPHLAAIIVGKDGASMTYVNSKVKACERVGFESSLFRLPHTVSELELLDKIEELNENDDIDGFIVQLPLPPQINTQKVLNAVDPDKDVDGFHPTNFGKMALDMTSFIPATPFGILELLERYDIPTKGKHTVVIGRSYIVGRPMSILMGRSGFPGNSTVTLTHEFTKNITQVTSQADIIIIAVGIPDFLKGEMIKDDAVIIDVGITRVPDDHAERGYVIKGDVDFENVSKRASFITPVPGGVGPMTVSMLLKNTLLARERHHKRAVDAKK.

NADP(+) contacts are provided by residues G164–S166 and I234.

The protein belongs to the tetrahydrofolate dehydrogenase/cyclohydrolase family. Homodimer.

The catalysed reaction is (6R)-5,10-methylene-5,6,7,8-tetrahydrofolate + NADP(+) = (6R)-5,10-methenyltetrahydrofolate + NADPH. It catalyses the reaction (6R)-5,10-methenyltetrahydrofolate + H2O = (6R)-10-formyltetrahydrofolate + H(+). The protein operates within one-carbon metabolism; tetrahydrofolate interconversion. Its function is as follows. Catalyzes the oxidation of 5,10-methylenetetrahydrofolate to 5,10-methenyltetrahydrofolate and then the hydrolysis of 5,10-methenyltetrahydrofolate to 10-formyltetrahydrofolate. The polypeptide is Bifunctional protein FolD (Christiangramia forsetii (strain DSM 17595 / CGMCC 1.15422 / KT0803) (Gramella forsetii)).